The following is a 305-amino-acid chain: tRNA pseudouridine synthase B (305 aa).

Residue D41 is the Nucleophile of the active site.

The protein belongs to the pseudouridine synthase TruB family. Type 1 subfamily.

The catalysed reaction is uridine(55) in tRNA = pseudouridine(55) in tRNA. Functionally, responsible for synthesis of pseudouridine from uracil-55 in the psi GC loop of transfer RNAs. The polypeptide is tRNA pseudouridine synthase B (Prochlorococcus marinus (strain MIT 9515)).